Consider the following 413-residue polypeptide: DnaJ protein homolog xdj1 (413 aa).

Positions 6–73 (KLYDILEVHF…ESREMYDMYG (68 aa)) constitute a J domain. The segment at 134-219 (GKEVKLRATR…CKGSGTVPEQ (86 aa)) adopts a CR-type zinc-finger fold. CXXCXGXG motif repeat units lie at residues 147-154 (CPRCQGRG), 164-171 (CLSCDGKG), 191-198 (CDTCNGKG), and 207-214 (CKHCKGSG). Cysteine methyl ester is present on Cys410. Cys410 carries S-farnesyl cysteine lipidation. A propeptide spans 411–413 (QAQ) (removed in mature form).

It localises to the endoplasmic reticulum membrane. The protein is DnaJ protein homolog xdj1 (xdj1) of Schizosaccharomyces pombe (strain 972 / ATCC 24843) (Fission yeast).